Reading from the N-terminus, the 287-residue chain is tRNA N(3)-cytidine methyltransferase METTL6 (287 aa).

Positions 45, 49, 87, 110, 136, 137, and 157 each coordinate S-adenosyl-L-methionine. Positions 267–287 (RKPPKDPAPTTDSASLLRKEF) are disordered.

It belongs to the methyltransferase superfamily. METL family. As to quaternary structure, monomer. Interacts with SARS1/SerRS; interaction is mediated via tRNA(Ser) and is required for N(3)-methylcytidine methylation.

The protein resides in the cytoplasm. It is found in the nucleus. The enzyme catalyses cytidine(32) in tRNA(Ser) + S-adenosyl-L-methionine = N(3)-methylcytidine(32) in tRNA(Ser) + S-adenosyl-L-homocysteine + H(+). In terms of biological role, S-adenosyl-L-methionine-dependent methyltransferase that mediates N(3)-methylcytidine modification of residue 32 of the tRNA anticodon loop of tRNA(Ser), including tRNA(Ser)(UGA) and tRNA(Ser)(GCU). Interaction with SARS1/SerRS is required for N(3)-methylcytidine methylation. This is tRNA N(3)-cytidine methyltransferase METTL6 (Mettl6) from Rattus norvegicus (Rat).